The primary structure comprises 199 residues: NAD(P)H dehydrogenase (quinone) (199 aa).

The 187-residue stretch at 4–190 (ILVLYYSSWG…EGARFQGKRL (187 aa)) folds into the Flavodoxin-like domain. FMN-binding positions include 10-15 (SSWGHM) and 78-80 (TRY). Trp-12 contacts NAD(+). Residue Trp-98 coordinates substrate. FMN-binding positions include 113–119 (STATQHG) and His-134. A disordered region spans residues 155–175 (VRGGAPYGMTTTSDTDGSRMP).

The protein belongs to the WrbA family. FMN serves as cofactor.

It catalyses the reaction a quinone + NADH + H(+) = a quinol + NAD(+). The catalysed reaction is a quinone + NADPH + H(+) = a quinol + NADP(+). This is NAD(P)H dehydrogenase (quinone) from Chelativorans sp. (strain BNC1).